The following is a 113-amino-acid chain: Large ribosomal subunit protein uL24 (113 aa).

This sequence belongs to the universal ribosomal protein uL24 family. Part of the 50S ribosomal subunit.

In terms of biological role, one of two assembly initiator proteins, it binds directly to the 5'-end of the 23S rRNA, where it nucleates assembly of the 50S subunit. Functionally, one of the proteins that surrounds the polypeptide exit tunnel on the outside of the subunit. This is Large ribosomal subunit protein uL24 from Synechococcus elongatus (strain ATCC 33912 / PCC 7942 / FACHB-805) (Anacystis nidulans R2).